Here is a 420-residue protein sequence, read N- to C-terminus: Phosphoribosylamine--glycine ligase (420 aa).

Residues 108–314 form the ATP-grasp domain; it reads KQFMEKYAIP…FAALIDALLH (207 aa). An ATP-binding site is contributed by 134 to 195; it reads LNERGVPIVI…EDFLAGEEFS (62 aa). Positions 284 and 286 each coordinate Mg(2+).

It belongs to the GARS family. Mg(2+) is required as a cofactor. The cofactor is Mn(2+).

It catalyses the reaction 5-phospho-beta-D-ribosylamine + glycine + ATP = N(1)-(5-phospho-beta-D-ribosyl)glycinamide + ADP + phosphate + H(+). It functions in the pathway purine metabolism; IMP biosynthesis via de novo pathway; N(1)-(5-phospho-D-ribosyl)glycinamide from 5-phospho-alpha-D-ribose 1-diphosphate: step 2/2. This chain is Phosphoribosylamine--glycine ligase, found in Listeria monocytogenes serovar 1/2a (strain ATCC BAA-679 / EGD-e).